We begin with the raw amino-acid sequence, 328 residues long: UPF0421 protein SERP1427 (328 aa).

A run of 4 helical transmembrane segments spans residues 26-46 (LFCMLLNLTPIFAILTAIVTI), 61-81 (LPATVIGALFAVVFTYVFGDQ), 109-129 (AVLTSVAMIPGIHEAYVFNFF), and 132-152 (LLTALIGLVTAGLVNFIILPP).

Belongs to the UPF0421 family.

The protein resides in the cell membrane. The protein is UPF0421 protein SERP1427 of Staphylococcus epidermidis (strain ATCC 35984 / DSM 28319 / BCRC 17069 / CCUG 31568 / BM 3577 / RP62A).